The sequence spans 313 residues: Ribosomal RNA small subunit methyltransferase H (313 aa).

Residues 35 to 37, D55, F79, D101, and Q108 each bind S-adenosyl-L-methionine; that span reads GGH.

The protein belongs to the methyltransferase superfamily. RsmH family.

Its subcellular location is the cytoplasm. The enzyme catalyses cytidine(1402) in 16S rRNA + S-adenosyl-L-methionine = N(4)-methylcytidine(1402) in 16S rRNA + S-adenosyl-L-homocysteine + H(+). Specifically methylates the N4 position of cytidine in position 1402 (C1402) of 16S rRNA. This is Ribosomal RNA small subunit methyltransferase H from Escherichia coli O139:H28 (strain E24377A / ETEC).